Consider the following 805-residue polypeptide: Phenylalanine--tRNA ligase beta subunit (805 aa).

The tRNA-binding domain maps to 39-148 (APPFTGVVVT…AALRPGTDIR (110 aa)). Positions 399-474 (PVREPVRMRL…RVYGFERIPD (76 aa)) constitute a B5 domain. Positions 452, 458, 461, and 462 each coordinate Mg(2+). Residues 703–804 (SRQPVVVRDL…LVAAHNARQR (102 aa)) form the FDX-ACB domain.

Belongs to the phenylalanyl-tRNA synthetase beta subunit family. Type 1 subfamily. As to quaternary structure, tetramer of two alpha and two beta subunits. Mg(2+) serves as cofactor.

It is found in the cytoplasm. The catalysed reaction is tRNA(Phe) + L-phenylalanine + ATP = L-phenylalanyl-tRNA(Phe) + AMP + diphosphate + H(+). This Bordetella pertussis (strain Tohama I / ATCC BAA-589 / NCTC 13251) protein is Phenylalanine--tRNA ligase beta subunit.